A 105-amino-acid chain; its full sequence is MFAVIKAGGKQYKVDRNSVIKIEKIDGELGSKVQFDQILMIGEYSKPSFIGTPIVKGAIVTAEITNQLKDNKIIAFKKKRRKNYRRKAGHRQELTELKILDITKQ.

The protein belongs to the bacterial ribosomal protein bL21 family. As to quaternary structure, part of the 50S ribosomal subunit. Contacts protein L20.

Functionally, this protein binds to 23S rRNA in the presence of protein L20. This is Large ribosomal subunit protein bL21 from Rickettsia typhi (strain ATCC VR-144 / Wilmington).